We begin with the raw amino-acid sequence, 706 residues long: Ribosomal RNA large subunit methyltransferase K/L (706 aa).

The THUMP domain occupies 43–154 (LLYQSLLWSR…RDMASVALDL (112 aa)).

The protein belongs to the methyltransferase superfamily. RlmKL family.

Its subcellular location is the cytoplasm. The enzyme catalyses guanosine(2445) in 23S rRNA + S-adenosyl-L-methionine = N(2)-methylguanosine(2445) in 23S rRNA + S-adenosyl-L-homocysteine + H(+). The catalysed reaction is guanosine(2069) in 23S rRNA + S-adenosyl-L-methionine = N(2)-methylguanosine(2069) in 23S rRNA + S-adenosyl-L-homocysteine + H(+). Its function is as follows. Specifically methylates the guanine in position 2445 (m2G2445) and the guanine in position 2069 (m7G2069) of 23S rRNA. The polypeptide is Ribosomal RNA large subunit methyltransferase K/L (Serratia proteamaculans (strain 568)).